Here is a 342-residue protein sequence, read N- to C-terminus: Pre-mRNA-splicing factor 18 (342 aa).

An N-acetylmethionine modification is found at methionine 1.

The protein belongs to the PRP18 family. As to quaternary structure, heterodimer with PPIH. Interacts with PRPF4 and with the spliceosome. Part of a complex containing U4/U6 snRNPs.

It is found in the nucleus speckle. Participates in the second step of pre-mRNA splicing. This chain is Pre-mRNA-splicing factor 18 (Prpf18), found in Mus musculus (Mouse).